Consider the following 645-residue polypeptide: UvrABC system protein C (645 aa).

The 80-residue stretch at 12 to 91 folds into the GIY-YIG domain; it reads TGPGVYLYKN…IKQRKPRFNV (80 aa). The UVR domain maps to 202-237; the sequence is ADLERSLEVRMQEAAAAEQFELAAKYRDLLVTLHQL.

Belongs to the UvrC family. As to quaternary structure, interacts with UvrB in an incision complex.

The protein resides in the cytoplasm. The UvrABC repair system catalyzes the recognition and processing of DNA lesions. UvrC both incises the 5' and 3' sides of the lesion. The N-terminal half is responsible for the 3' incision and the C-terminal half is responsible for the 5' incision. This Acidobacterium capsulatum (strain ATCC 51196 / DSM 11244 / BCRC 80197 / JCM 7670 / NBRC 15755 / NCIMB 13165 / 161) protein is UvrABC system protein C.